A 302-amino-acid polypeptide reads, in one-letter code: MSEREFLRFGDELDVKNCNTSRSFNGLLMAIGGIIGGTAGMLIALIIAGFMNFMSYWFSDKIVLSMYGAREIPYEEAPWLHQIVEELARRANMPKPKIYLVPMEQPNAFATGRGPGHAAVAVTRGILEILDQEELKGVLAHELAHIKNRDVLVATIAATIAGAIGFLANMAQWALFFGGLNRNEEEEGGGFAEMIGAILMIIIVPIIATIVQLAISRSREYFADETGAKICGCPVALARALKKIEEYVMQVPANVNPGTAHLFIENPLKGGGIMELLSTHPSTEKRIQRLCELARKMGQECI.

Residues 27 to 47 traverse the membrane as a helical segment; the sequence is LLMAIGGIIGGTAGMLIALII. Residue His141 participates in Zn(2+) binding. Glu142 is an active-site residue. Zn(2+) is bound at residue His145. 2 helical membrane passes run 151-171 and 195-215; these read VLVATIAATIAGAIGFLANMA and IGAILMIIIVPIIATIVQLAI. Position 220 (Glu220) interacts with Zn(2+).

Belongs to the peptidase M48B family. The cofactor is Zn(2+).

Its subcellular location is the cell inner membrane. In Aquifex aeolicus (strain VF5), this protein is Protease HtpX homolog.